Reading from the N-terminus, the 91-residue chain is Acylphosphatase (91 aa).

Residues 3–89 (AKHLILSGRV…PAEPGFVKRA (87 aa)) enclose the Acylphosphatase-like domain. Active-site residues include Arg18 and Asn36.

It belongs to the acylphosphatase family.

It carries out the reaction an acyl phosphate + H2O = a carboxylate + phosphate + H(+). The sequence is that of Acylphosphatase (acyP) from Acidiphilium cryptum (strain JF-5).